A 388-amino-acid polypeptide reads, in one-letter code: MNSALKAIIELCIEEDLLPKSLDVLEYLLSTTSIPIPACYIRMCITLLVHPEYPTSSNIQESCNWILQQVVENRSKINFDAWSFENDLSDNDMPKENYLKIFSNQCLFTQDVDYWDLIAYMSSRPPDLERWMSLMDIWLRILEIDAEENGSALMKKYMGEDLCELQDAIRICFSCFTLPQQTMESPFATSMSKAPAKTESRGSNSFEGTSRLANLGAKLLCLIWAMLPKGRFFVVHLTDAFHFLSKLDERFSKLNAKQQDLFFGNLGASNLRYCLSQYILMKGIGIGINIRHTRCEFTKQLTQLLPTSLPKNKIRQKLHLRAWVSFLGSALRESDRNFDKELFYTTLKQLYTMYQQTELVGIDRPMAILKDMLVLLDISKKLSLDKIV.

In terms of assembly, component of the smc5/smc6 complex which consists of two subcomplexes, smc5-smc6-nse2 and nse1-nse2-nse4. Interacts with nse6 and rfp1.

The protein resides in the cytoplasm. Its subcellular location is the nucleus. It is found in the chromosome. Its function is as follows. Acts in a DNA repair pathway for removal of UV-induced DNA damage that is distinct from classical nucleotide excision repair and in repair of ionizing radiation damage. Functions in homologous recombination repair of DNA double strand breaks and in recovery of stalled replication forks. May prevent formation of excessive Holliday junctions or assist in their resolution. This chain is Non-structural maintenance of chromosome element 5 (nse5), found in Schizosaccharomyces pombe (strain 972 / ATCC 24843) (Fission yeast).